A 506-amino-acid chain; its full sequence is UDP-N-acetylmuramoylalanine--D-glutamate ligase (506 aa).

128-134 (GTNGKTT) is an ATP binding site.

Belongs to the MurCDEF family.

Its subcellular location is the cytoplasm. It catalyses the reaction UDP-N-acetyl-alpha-D-muramoyl-L-alanine + D-glutamate + ATP = UDP-N-acetyl-alpha-D-muramoyl-L-alanyl-D-glutamate + ADP + phosphate + H(+). Its pathway is cell wall biogenesis; peptidoglycan biosynthesis. Cell wall formation. Catalyzes the addition of glutamate to the nucleotide precursor UDP-N-acetylmuramoyl-L-alanine (UMA). The sequence is that of UDP-N-acetylmuramoylalanine--D-glutamate ligase from Albidiferax ferrireducens (strain ATCC BAA-621 / DSM 15236 / T118) (Rhodoferax ferrireducens).